The following is an 862-amino-acid chain: Cytosolic carboxypeptidase 2 (862 aa).

The Peptidase M14 domain maps to Tyr359 to Cys629. 3 residues coordinate Zn(2+): His425, Glu428, and His521. The active-site Proton donor/acceptor is the Glu593. Disordered regions lie at residues Ser669–Pro692, Asn704–Gln728, and Ser750–Ser836. The span at Ser674–Asp689 shows a compositional bias: low complexity. Residues Asn711 to Lys721 show a composition bias toward basic residues. The span at Ala813–Leu825 shows a compositional bias: polar residues.

The protein belongs to the peptidase M14 family. As to quaternary structure, interacts with RARRES1, KIF11 and MAPRE1. It depends on Zn(2+) as a cofactor. As to expression, widely expressed. Expressed in tissues with motile cilia such as testis, lung and trachea. Also detected in brain, eye, muscle, pancreas, intestine, stomach, pituitary, spleen, adrenal and kidney. Expressed in mitral and granular cells in brain.

The protein resides in the cytoplasm. It is found in the cytosol. The protein localises to the cytoskeleton. Its subcellular location is the microtubule organizing center. It localises to the centrosome. The protein resides in the centriole. It is found in the cilium basal body. It carries out the reaction (L-glutamyl)(n+1)-gamma-L-glutamyl-L-glutamyl-[protein] + H2O = (L-glutamyl)(n)-gamma-L-glutamyl-L-glutamyl-[protein] + L-glutamate. Its activity is regulated as follows. Inhibited by RARRES1. Metallocarboxypeptidase that mediates deglutamylation of tubulin and non-tubulin target proteins. Catalyzes the removal of polyglutamate side chains present on the gamma-carboxyl group of glutamate residues within the C-terminal tail of tubulin protein. Specifically cleaves tubulin long-side-chains, while it is not able to remove the branching point glutamate. Also catalyzes the removal of polyglutamate residues from the carboxy-terminus of non-tubulin proteins such as MYLK. The sequence is that of Cytosolic carboxypeptidase 2 from Mus musculus (Mouse).